A 60-amino-acid chain; its full sequence is Large ribosomal subunit protein bL33 (60 aa).

It belongs to the bacterial ribosomal protein bL33 family.

This is Large ribosomal subunit protein bL33 from Pelodictyon phaeoclathratiforme (strain DSM 5477 / BU-1).